Here is a 632-residue protein sequence, read N- to C-terminus: 2-hydroxyacyl-CoA lyase 2 (632 aa).

Residues 13–33 (FFPSFLLLAFGTLVAAVLGVA) form a helical membrane-spanning segment. Glutamate 98 is a thiamine diphosphate binding site. At serine 369 the chain carries Phosphoserine. A thiamine pyrophosphate binding region spans residues 470–550 (DFVATAAYLV…VIALVGNDAG (81 aa)). The Mg(2+) site is built by aspartate 521 and asparagine 547.

It belongs to the TPP enzyme family. Mg(2+) serves as cofactor. It depends on thiamine diphosphate as a cofactor.

Its subcellular location is the endoplasmic reticulum membrane. The catalysed reaction is 2-hydroxyoctadecanoyl-CoA = heptadecanal + formyl-CoA. The enzyme catalyses (2R)-hydroxyhexadecanoyl-CoA = pentadecanal + formyl-CoA. Endoplasmic reticulum 2-OH acyl-CoA lyase involved in the cleavage (C1 removal) reaction in the fatty acid alpha-oxydation in a thiamine pyrophosphate (TPP)-dependent manner. Involved in the phytosphingosine degradation pathway. The polypeptide is 2-hydroxyacyl-CoA lyase 2 (Ilvbl) (Mus musculus (Mouse)).